The sequence spans 339 residues: Trace amine-associated receptor 1 (339 aa).

Residues 1–25 (MMPFCHNIINISCVKNNWSNDVRAS) are Extracellular-facing. Intrachain disulfides connect C5-C178, C13-C88, and C96-C182. N-linked (GlcNAc...) asparagine glycosylation is found at N10 and N17. The chain crosses the membrane as a helical span at residues 26–46 (LYSLMVLIILTTLVGNLIVIV). Residues 47–59 (SISHFKELHTPTN) are Cytoplasmic-facing. Residues 60-80 (WLIHSMATVDFLPGCLVMPYS) form a helical membrane-spanning segment. The Extracellular portion of the chain corresponds to 81–98 (MVRSAEHCWYFGEVFCKI). The chain crosses the membrane as a helical span at residues 99-119 (HTSTDIMLSSASIFHLSFISI). Residue D103 participates in 2-phenylethylamine binding. At 120 to 136 (DRYYAVCDPLRYKAKIN) the chain is on the cytoplasmic side. Residues 137–157 (ILVICVMIFISWSVPAVFAFG) form a helical membrane-spanning segment. Topologically, residues 158–188 (MIFLELNFKGAEEIYYKHVHCRGGCSVFFSK) are extracellular. A helical membrane pass occupies residues 189-209 (ISGVLTFMTSFYIPGSIMLCV). The Cytoplasmic segment spans residues 210-252 (YYRIYLIAKEQARLINDANQKLQIGLEMKNGISQSKERKAVKT). The chain crosses the membrane as a helical span at residues 253–273 (LGIVMGVFLICWCPFFICTVM). The Extracellular portion of the chain corresponds to 274 to 287 (DPFLHYIIPPTLND). Residues 288-308 (VLIWFGYLNSTFNPMVYAFFY) form a helical membrane-spanning segment. Over 309–339 (PWFRKALKMMLFGKIFQKDSSRCKLFLELSS) the chain is Cytoplasmic.

This sequence belongs to the G-protein coupled receptor 1 family.

It is found in the endomembrane system. The protein localises to the endoplasmic reticulum membrane. The protein resides in the cell membrane. Its function is as follows. Intracellular G-protein coupled receptor for trace amines, which recognizes endogenous amine-containing metabolites such as beta-phenylethylamine (beta-PEA), 3-iodothyronamine (T1AM), isoamylamine (IAA), cadaverine (CAD), cyclohexylamine (CHA), p-tyramine (p-TYR), trimethylamine (TMA), octopamine and tryptamine. Also functions as a receptor for various drugs and psychoactive substances, such as amphetamine and methamphetamine. Unresponsive to classical biogenic amines, such as epinephrine and histamine and only partially activated by dopamine and serotonin. Expressed in both the central and peripheral nervous system: TAAR1 activation regulates the activity of several neurotransmitter signaling pathways by (1) decreasing the basal firing rates of the neurons involved and by (2) lowering the sensitivity of receptors to neurotransmitters. Ligand binding causes a conformation change that triggers signaling via guanine nucleotide-binding proteins (G proteins) and modulates the activity of downstream effectors. TAAR1 is coupled with different G(i)/G(o)-, G(s)- or G(q)/G(11) classes of G alpha proteins depending on the ligand. CAD-binding is coupled to G(i)/G(o) G alpha proteins and mediates inhibition of adenylate cyclase activity. T1AM- or beta-PEA-binding is coupled to G(s) G alpha proteins and mediates activation of adenylate cyclase activity. CHA- or IAA-binding is coupled to G(q)/G(11) G alpha proteins and activates phospholipase C-beta, releasing diacylglycerol (DAG) and inositol 1,4,5-trisphosphate (IP3) second messengers. TMA-binding is coupled with all three G(i)/G(o)-, G(s)- or G(q)/G(11) G alpha protein subtypes. The polypeptide is Trace amine-associated receptor 1 (TAAR1) (Pan troglodytes (Chimpanzee)).